Consider the following 213-residue polypeptide: 2-dehydro-3-deoxy-phosphogluconate aldolase (213 aa).

Glutamate 45 acts as the Proton acceptor in catalysis. Pyruvate contacts are provided by arginine 49, threonine 73, and lysine 133. Lysine 133 acts as the Schiff-base intermediate with substrate in catalysis.

The protein belongs to the KHG/KDPG aldolase family. As to quaternary structure, homotrimer.

The protein resides in the cytoplasm. It catalyses the reaction 2-dehydro-3-deoxy-6-phospho-D-gluconate = D-glyceraldehyde 3-phosphate + pyruvate. Its pathway is carbohydrate acid metabolism; 2-dehydro-3-deoxy-D-gluconate degradation; D-glyceraldehyde 3-phosphate and pyruvate from 2-dehydro-3-deoxy-D-gluconate: step 2/2. Functionally, involved in the degradation of glucose via the Entner-Doudoroff pathway. Catalyzes the reversible, stereospecific retro-aldol cleavage of 2-keto-3-deoxy-6-phosphogluconate (KDPG) to pyruvate and D-glyceraldehyde-3-phosphate. The chain is 2-dehydro-3-deoxy-phosphogluconate aldolase (eda) from Dickeya dadantii (strain 3937) (Erwinia chrysanthemi (strain 3937)).